The chain runs to 397 residues: uncharacterized protein (397 aa).

[4Fe-4S] cluster contacts are provided by Cys-8, Cys-14, Cys-17, and Cys-95. S-adenosyl-L-methionine contacts are provided by Gln-229, Tyr-258, Glu-279, and Asp-325. The Nucleophile role is filled by Cys-352.

This sequence belongs to the class I-like SAM-binding methyltransferase superfamily. RNA M5U methyltransferase family.

This is an uncharacterized protein from Chlamydia muridarum (strain MoPn / Nigg).